A 311-amino-acid chain; its full sequence is Aspartate carbamoyltransferase catalytic subunit (311 aa).

Carbamoyl phosphate is bound by residues R57 and T58. K86 serves as a coordination point for L-aspartate. Carbamoyl phosphate contacts are provided by R107, H135, and Q138. L-aspartate is bound by residues R168 and R230. The carbamoyl phosphate site is built by L269 and P270.

It belongs to the aspartate/ornithine carbamoyltransferase superfamily. ATCase family. Heterooligomer of catalytic and regulatory chains.

The enzyme catalyses carbamoyl phosphate + L-aspartate = N-carbamoyl-L-aspartate + phosphate + H(+). It participates in pyrimidine metabolism; UMP biosynthesis via de novo pathway; (S)-dihydroorotate from bicarbonate: step 2/3. Functionally, catalyzes the condensation of carbamoyl phosphate and aspartate to form carbamoyl aspartate and inorganic phosphate, the committed step in the de novo pyrimidine nucleotide biosynthesis pathway. This Staphylothermus marinus (strain ATCC 43588 / DSM 3639 / JCM 9404 / F1) protein is Aspartate carbamoyltransferase catalytic subunit.